We begin with the raw amino-acid sequence, 436 residues long: UPF0597 protein YhaM (436 aa).

This sequence belongs to the UPF0597 family.

The polypeptide is UPF0597 protein YhaM (Salmonella paratyphi B (strain ATCC BAA-1250 / SPB7)).